A 424-amino-acid polypeptide reads, in one-letter code: STAM-binding protein (424 aa).

The interval 1 to 127 (MSDHGDVSLP…YTEYNEEKKK (127 aa)) is interaction with CHMP3. Residues Ser2 and Ser48 each carry the phosphoserine modification. The interval 227 to 231 (PAKPP) is interaction with STAM. Residues Ser243, Ser245, and Ser247 each carry the phosphoserine modification. An MPN domain is found at 257–388 (VVVPGRLCPQ…LTDHGLEEIS (132 aa)). Residues His335, His337, Asp348, His350, Cys390, His396, and His398 each contribute to the Zn(2+) site. Positions 335–348 (HTHPTQTAFLSSVD) match the JAMM motif motif.

This sequence belongs to the peptidase M67C family. In terms of assembly, interacts with STAM. Interacts with SMAD6 and SMAD7. Interacts with CHMP3; the interaction appears to relieve the autoinhibition of CHMP3. Interacts with SMURF2 and RNF11; this interaction promotes ubiquitination. Zn(2+) is required as a cofactor. Phosphorylated after BMP type I receptor activation. In terms of processing, ubiquitinated by SMURF2 in the presence of RNF11. In terms of tissue distribution, ubiquitously expressed.

The protein resides in the nucleus. It is found in the membrane. Its subcellular location is the cytoplasm. The protein localises to the early endosome. With respect to regulation, inhibited by N-ethylmaleimide. Strongly and specifically inhibited by ubiquitin variants UbV(SP.2) and UbV(SP.3). Also inhibited by UbV(SP.1); an ubiquitin variant that also inhibits STAMBPL1. Zinc metalloprotease that specifically cleaves 'Lys-63'-linked polyubiquitin chains. Does not cleave 'Lys-48'-linked polyubiquitin chains. Plays a role in signal transduction for cell growth and MYC induction mediated by IL-2 and GM-CSF. Potentiates BMP (bone morphogenetic protein) signaling by antagonizing the inhibitory action of SMAD6 and SMAD7. Has a key role in regulation of cell surface receptor-mediated endocytosis and ubiquitin-dependent sorting of receptors to lysosomes. Endosomal localization of STAMBP is required for efficient EGFR degradation but not for its internalization. Involved in the negative regulation of PI3K-AKT-mTOR and RAS-MAP signaling pathways. The sequence is that of STAM-binding protein (STAMBP) from Homo sapiens (Human).